The chain runs to 405 residues: Imidazolonepropionase (405 aa).

2 residues coordinate Fe(3+): H70 and H72. 2 residues coordinate Zn(2+): H70 and H72. 4-imidazolone-5-propanoate-binding residues include R79, Y142, and H175. Y142 contacts N-formimidoyl-L-glutamate. A Fe(3+)-binding site is contributed by H240. Zn(2+) is bound at residue H240. Q243 contacts 4-imidazolone-5-propanoate. Fe(3+) is bound at residue D315. D315 is a Zn(2+) binding site. N317 and G319 together coordinate N-formimidoyl-L-glutamate. 4-imidazolone-5-propanoate is bound at residue S320.

This sequence belongs to the metallo-dependent hydrolases superfamily. HutI family. Zn(2+) is required as a cofactor. Requires Fe(3+) as cofactor.

The protein resides in the cytoplasm. The enzyme catalyses 4-imidazolone-5-propanoate + H2O = N-formimidoyl-L-glutamate. The protein operates within amino-acid degradation; L-histidine degradation into L-glutamate; N-formimidoyl-L-glutamate from L-histidine: step 3/3. Catalyzes the hydrolytic cleavage of the carbon-nitrogen bond in imidazolone-5-propanoate to yield N-formimidoyl-L-glutamate. It is the third step in the universal histidine degradation pathway. The chain is Imidazolonepropionase from Ruegeria sp. (strain TM1040) (Silicibacter sp.).